The following is a 430-amino-acid chain: Adenylosuccinate synthetase (430 aa).

Residues 12 to 18 (GDEGKGK) and 40 to 42 (GHT) each bind GTP. The Proton acceptor role is filled by Asp13. Mg(2+) is bound by residues Asp13 and Gly40. IMP contacts are provided by residues 13 to 16 (DEGK), 38 to 41 (NAGH), Thr128, Arg142, Gln223, Thr238, and Arg302. The active-site Proton donor is the His41. 298–304 (TTTGRPR) is a substrate binding site. GTP-binding positions include Arg304, 330–332 (SID), and 413–415 (SVG).

The protein belongs to the adenylosuccinate synthetase family. As to quaternary structure, homodimer. It depends on Mg(2+) as a cofactor.

It localises to the cytoplasm. The enzyme catalyses IMP + L-aspartate + GTP = N(6)-(1,2-dicarboxyethyl)-AMP + GDP + phosphate + 2 H(+). It functions in the pathway purine metabolism; AMP biosynthesis via de novo pathway; AMP from IMP: step 1/2. Plays an important role in the de novo pathway of purine nucleotide biosynthesis. Catalyzes the first committed step in the biosynthesis of AMP from IMP. In Lactococcus lactis subsp. lactis (strain IL1403) (Streptococcus lactis), this protein is Adenylosuccinate synthetase.